The chain runs to 548 residues: Chaperonin GroEL (548 aa).

Residues 30–33 (TLGP), Lys51, 87–91 (DGTTT), Gly415, and Asp495 each bind ATP.

Belongs to the chaperonin (HSP60) family. Forms a cylinder of 14 subunits composed of two heptameric rings stacked back-to-back. Interacts with the co-chaperonin GroES.

The protein localises to the cytoplasm. The enzyme catalyses ATP + H2O + a folded polypeptide = ADP + phosphate + an unfolded polypeptide.. In terms of biological role, together with its co-chaperonin GroES, plays an essential role in assisting protein folding. The GroEL-GroES system forms a nano-cage that allows encapsulation of the non-native substrate proteins and provides a physical environment optimized to promote and accelerate protein folding. The polypeptide is Chaperonin GroEL (Idiomarina loihiensis (strain ATCC BAA-735 / DSM 15497 / L2-TR)).